Reading from the N-terminus, the 163-residue chain is Protein-export protein SecB (163 aa).

The protein belongs to the SecB family. As to quaternary structure, homotetramer, a dimer of dimers. One homotetramer interacts with 1 SecA dimer.

Its subcellular location is the cytoplasm. Its function is as follows. One of the proteins required for the normal export of preproteins out of the cell cytoplasm. It is a molecular chaperone that binds to a subset of precursor proteins, maintaining them in a translocation-competent state. It also specifically binds to its receptor SecA. This chain is Protein-export protein SecB, found in Azotobacter vinelandii (strain DJ / ATCC BAA-1303).